We begin with the raw amino-acid sequence, 90 residues long: U7-theraphotoxin-Hhn1a 2 (90 aa).

The first 19 residues, 1–19, serve as a signal peptide directing secretion; the sequence is MKIAIFTVVLALAVFAVLS. The propeptide occupies 20–50; it reads FGWEANEKALSEEFTELIHEKEAASETEARE. 3 cysteine pairs are disulfide-bonded: cysteine 51/cysteine 65, cysteine 58/cysteine 70, and cysteine 64/cysteine 81.

It belongs to the neurotoxin 10 (Hwtx-1) family. 13 (Hntx-13) subfamily. As to expression, expressed by the venom gland.

Its subcellular location is the secreted. Ion channel inhibitor. The chain is U7-theraphotoxin-Hhn1a 2 from Cyriopagopus hainanus (Chinese bird spider).